Consider the following 242-residue polypeptide: Uridylate kinase (242 aa).

Residues 15 to 18 (KISG), Gly58, and Arg62 each bind ATP. UMP is bound by residues Asp77 and 139-146 (TGNPFFTT). ATP contacts are provided by Thr166, Tyr172, and Asp175.

This sequence belongs to the UMP kinase family. As to quaternary structure, homohexamer.

The protein localises to the cytoplasm. It carries out the reaction UMP + ATP = UDP + ADP. The protein operates within pyrimidine metabolism; CTP biosynthesis via de novo pathway; UDP from UMP (UMPK route): step 1/1. Its activity is regulated as follows. Inhibited by UTP. In terms of biological role, catalyzes the reversible phosphorylation of UMP to UDP. This is Uridylate kinase from Buchnera aphidicola subsp. Acyrthosiphon pisum (strain APS) (Acyrthosiphon pisum symbiotic bacterium).